The sequence spans 237 residues: Ubiquinone biosynthesis O-methyltransferase (237 aa).

Residues Arg-38, Gly-58, Asp-79, and Met-124 each contribute to the S-adenosyl-L-methionine site.

The protein belongs to the methyltransferase superfamily. UbiG/COQ3 family.

The catalysed reaction is a 3-demethylubiquinol + S-adenosyl-L-methionine = a ubiquinol + S-adenosyl-L-homocysteine + H(+). It carries out the reaction a 3-(all-trans-polyprenyl)benzene-1,2-diol + S-adenosyl-L-methionine = a 2-methoxy-6-(all-trans-polyprenyl)phenol + S-adenosyl-L-homocysteine + H(+). It functions in the pathway cofactor biosynthesis; ubiquinone biosynthesis. O-methyltransferase that catalyzes the 2 O-methylation steps in the ubiquinone biosynthetic pathway. The polypeptide is Ubiquinone biosynthesis O-methyltransferase (Acinetobacter baumannii (strain AB307-0294)).